Here is a 201-residue protein sequence, read N- to C-terminus: Inosine triphosphate pyrophosphatase (201 aa).

An ITP-binding site is contributed by 16–21 (TGNAKK). Glu-44 is a binding site for Mg(2+). Residues Lys-56, 72–73 (DT), Lys-89, 148–151 (FGWD), Lys-171, and 176–177 (HR) each bind ITP.

Belongs to the HAM1 NTPase family. In terms of assembly, homodimer. Mg(2+) is required as a cofactor. The cofactor is Mn(2+).

It is found in the cytoplasm. The catalysed reaction is ITP + H2O = IMP + diphosphate + H(+). The enzyme catalyses dITP + H2O = dIMP + diphosphate + H(+). It catalyses the reaction XTP + H2O = XMP + diphosphate + H(+). Its function is as follows. Pyrophosphatase that hydrolyzes non-canonical purine nucleotides such as inosine triphosphate (ITP), deoxyinosine triphosphate (dITP) or xanthosine 5'-triphosphate (XTP) to their respective monophosphate derivatives. The enzyme does not distinguish between the deoxy- and ribose forms. Probably excludes non-canonical purines from RNA and DNA precursor pools, thus preventing their incorporation into RNA and DNA and avoiding chromosomal lesions. In Sorghum bicolor (Sorghum), this protein is Inosine triphosphate pyrophosphatase.